A 285-amino-acid chain; its full sequence is K88 fimbrial protein AD (285 aa).

A signal peptide spans 1–21; that stretch reads MKKTLIALAIAASAASGMAHA.

Belongs to the fimbrial K88 protein family. In terms of assembly, K88 fimbria, 0.1-1 micrometer in length and 7 nanometers in diameter, is composed of about 100 identical subunits.

It is found in the fimbrium. K88 major fimbrial subunit. Fimbriae (also called pili), are polar filaments radiating from the surface of the bacterium to a length of 0.5-1.5 micrometers and numbering 100-300 per cell. They enable bacteria to colonize the epithelium of specific host organs. The sequence is that of K88 fimbrial protein AD (faeG) from Escherichia coli.